A 626-amino-acid polypeptide reads, in one-letter code: MSLEISGSKLIKAQIIDAPECSGVYKMLDVNKQVIYIGKAKILKKRLTNYIKSDLDNKTLRMISNTYFLEYIITNSEVEALLLEAQLIKKFQPKFNILLKDDKSFPFIKLSLDHDFPQLIKYRGKALSDGKFFGPFASNTQVNTTLTELQKIFKLRSCTDNYFNSRTRPCLQYEIKRCYAPCVGKINKEDYRELVMQVKDFLQCRTIALQANLSKKMQELSSQMRFEEAAEIRDRIKALSYVQLKSGILDVVRDADIIAIVHKNLHYCIEVSLYRAGQPYGAIPYFFSSTENSTHEEVLEYFLLQFYQKQQVPSEIIMNHEINSKENMIEAIKKINNISDLSITVPHKGGKAKLVQKAEVNALLSLEQYLKKSIKNTDIMFALKKLFDLPEIPERIEIYDNSHLQGMFAVGVMVVAGQIGFDKKEYRVFSLSSRSLTIGSEIELRDDRKGDDYGMLRQVLTRRFTRLKNEPHKLPSLMIIDGGKGHLTIVKEVMDKFEINIPFVCMSKGRDRNAGLEQLHMQGKEVLTLDKNLPIMKYLQILRDEAHNFAIKNHRLGRSRAIKISSLDEIDGIGETRKTALLHYFGSYKAVCNATIDELTKVKGISKSLASMIFNILNRKISLDNS.

The 78-residue stretch at 20-97 folds into the GIY-YIG domain; it reads ECSGVYKMLD…IKKFQPKFNI (78 aa). The 36-residue stretch at 207-242 folds into the UVR domain; sequence IALQANLSKKMQELSSQMRFEEAAEIRDRIKALSYV.

It belongs to the UvrC family. Interacts with UvrB in an incision complex.

The protein localises to the cytoplasm. The UvrABC repair system catalyzes the recognition and processing of DNA lesions. UvrC both incises the 5' and 3' sides of the lesion. The N-terminal half is responsible for the 3' incision and the C-terminal half is responsible for the 5' incision. The chain is UvrABC system protein C from Rickettsia prowazekii (strain Madrid E).